A 306-amino-acid chain; its full sequence is tRNA dimethylallyltransferase (306 aa).

15–22 (GPTASGKS) is an ATP binding site. Position 17 to 22 (17 to 22 (TASGKS)) interacts with substrate. Positions 40-43 (DSMQ) are interaction with substrate tRNA.

Belongs to the IPP transferase family. In terms of assembly, monomer. The cofactor is Mg(2+).

The catalysed reaction is adenosine(37) in tRNA + dimethylallyl diphosphate = N(6)-dimethylallyladenosine(37) in tRNA + diphosphate. Catalyzes the transfer of a dimethylallyl group onto the adenine at position 37 in tRNAs that read codons beginning with uridine, leading to the formation of N6-(dimethylallyl)adenosine (i(6)A). The sequence is that of tRNA dimethylallyltransferase from Methylobacterium sp. (strain 4-46).